A 300-amino-acid chain; its full sequence is MDNTSKVHKLMELAELARLPRRKEVEGAVIVIKVGGHAMVDPAARSSIIKDIVTLRELGALPVIVHGGGPEIDAMVKRMGMTPSFVAGIRVTDDETLEIVRMVLVGNVSPDIVSLIMRHGGKGVGLLGSSGSLLIARKKPMEKVKVDGKEIMVDYGWVGDTEQVNTSILMDLLDKGYIPVISPIGYDRDGHCLNLNADTVAGDIASALKAGSLVSLTDVNGVMMDPSDKSTLLSHLTEKECEDLIERGIISRGMIPKIRSSLCVLKAGAHSVHIINGNIEHALLLELLTEKGVGTRLTLK.

Residues 68 to 69 (GG), Arg-90, and Asn-194 contribute to the substrate site.

It belongs to the acetylglutamate kinase family. ArgB subfamily.

It localises to the cytoplasm. The catalysed reaction is N-acetyl-L-glutamate + ATP = N-acetyl-L-glutamyl 5-phosphate + ADP. Its pathway is amino-acid biosynthesis; L-arginine biosynthesis; N(2)-acetyl-L-ornithine from L-glutamate: step 2/4. Functionally, catalyzes the ATP-dependent phosphorylation of N-acetyl-L-glutamate. The protein is Acetylglutamate kinase of Methanocella arvoryzae (strain DSM 22066 / NBRC 105507 / MRE50).